A 371-amino-acid polypeptide reads, in one-letter code: MLSHLADLQDYFGPLRLLRYITVRTLLAAVTSLTIGFVIAPWLIAKFRELKLGHGYIDDRTGALGATYFDKKNTPTMGGLIIFLSVFTSAALWAAPNIWVFVSLFVYAALTIPGWRDDYLKVVHKNRNGISSWEKIGWQSLATVVALGLLLWHPASAQKIREFWVPFVKYPLIPHMHWAVLLVLIYLWIVGFSNAINLTDGLDGLAIGCTIPVALVFGIMAYVADHVFLSQYLLTSHVPGTGELAVICGALIGGCMAFLWYNCHPAEVFMGDTGSLALGGLIGVMAFMIHQPLTLVIVGGVFVAEMLSVVVQVGVFKITKRRSGVGRRFFLMAPVHHHFQKKGWPETKVVLRFWVLSLGCALAGLATLKLR.

9 consecutive transmembrane segments (helical) span residues 25-45 (TLLAAVTSLTIGFVIAPWLIA), 77-94 (MGGLIIFLSVFTSAALWA), 136-156 (IGWQSLATVVALGLLLWHPAS), 172-192 (LIPHMHWAVLLVLIYLWIVGF), 204-224 (GLAIGCTIPVALVFGIMAYVA), 240-260 (GTGELAVICGALIGGCMAFLW), 269-289 (FMGDTGSLALGGLIGVMAFMI), 296-316 (VIVGGVFVAEMLSVVVQVGVF), and 348-368 (KVVLRFWVLSLGCALAGLATL).

It belongs to the glycosyltransferase 4 family. MraY subfamily. The cofactor is Mg(2+).

Its subcellular location is the cell inner membrane. It carries out the reaction UDP-N-acetyl-alpha-D-muramoyl-L-alanyl-gamma-D-glutamyl-meso-2,6-diaminopimeloyl-D-alanyl-D-alanine + di-trans,octa-cis-undecaprenyl phosphate = di-trans,octa-cis-undecaprenyl diphospho-N-acetyl-alpha-D-muramoyl-L-alanyl-D-glutamyl-meso-2,6-diaminopimeloyl-D-alanyl-D-alanine + UMP. The protein operates within cell wall biogenesis; peptidoglycan biosynthesis. Catalyzes the initial step of the lipid cycle reactions in the biosynthesis of the cell wall peptidoglycan: transfers peptidoglycan precursor phospho-MurNAc-pentapeptide from UDP-MurNAc-pentapeptide onto the lipid carrier undecaprenyl phosphate, yielding undecaprenyl-pyrophosphoryl-MurNAc-pentapeptide, known as lipid I. The chain is Phospho-N-acetylmuramoyl-pentapeptide-transferase from Opitutus terrae (strain DSM 11246 / JCM 15787 / PB90-1).